We begin with the raw amino-acid sequence, 532 residues long: UDP-glucuronosyltransferase 1A4 (532 aa).

The N-terminal stretch at 1–27 (MVLGVWITLWRLVRLLLLLCVLPWAEG) is a signal peptide. N-linked (GlcNAc...) asparagine glycosylation is found at Asn-141 and Asn-295. Residues 490–506 (VIGFLLAIVLTVAFVTF) form a helical membrane-spanning segment.

This sequence belongs to the UDP-glycosyltransferase family. Homodimers. Homooligomer. Interacts with UGT1A1, UGT1A3, UGT1A6, UGT1A7, UGT1A8, UGT1A9 and UGT1A10 to form heterodimers.

It is found in the endoplasmic reticulum membrane. It carries out the reaction glucuronate acceptor + UDP-alpha-D-glucuronate = acceptor beta-D-glucuronoside + UDP + H(+). It catalyses the reaction calcidiol + UDP-alpha-D-glucuronate = calcidiol 25-O-(beta-D-glucuronide) + UDP + H(+). The enzyme catalyses calcidiol + UDP-alpha-D-glucuronate = calcidiol 3-O-(beta-D-glucuronide) + UDP + H(+). The catalysed reaction is calcitriol + UDP-alpha-D-glucuronate = calcitriol 25-O-(beta-D-glucuronide) + UDP + H(+). It carries out the reaction (5Z,8Z,11Z,14Z)-eicosatetraenoate + UDP-alpha-D-glucuronate = O-[(5Z),(8Z),(11Z),(14Z)-eicosatetraenoyl]-beta-D-glucuronate + UDP. It catalyses the reaction 15-hydroxy-(5Z,8Z,11Z,13E)-eicosatetraenoate + UDP-alpha-D-glucuronate = 15-O-(beta-D-glucuronosyl)-(5Z,8Z,11Z,14Z)-eicosatetraenoate + UDP + H(+). The enzyme catalyses 20-hydroxy-(5Z,8Z,11Z,14Z)-eicosatetraenoate + UDP-alpha-D-glucuronate = 20-O-(beta-D-glucuronosyl)-(5Z,8Z,11Z,14Z)-eicosatetraenoate + UDP + H(+). Its function is as follows. UDP-glucuronosyltransferase (UGT) that catalyzes phase II biotransformation reactions in which lipophilic substrates are conjugated with glucuronic acid to increase the metabolite's water solubility, thereby facilitating excretion into either the urine or bile. Essential for the elimination and detoxification of drugs, xenobiotics and endogenous compounds. Involved in the glucuronidation of calcidiol, which is the major circulating form of vitamin D3 essential for the regulation of calcium and phosphate homeostasis. Also glucuronidates the biologically active form of vitamin D3, calcitriol, probably leading to its biliary transport and intestinal reabsorption. Involved in the glucuronidation of arachidonic acid (AA) and AA-derived eicosanoids including 15-HETE, 20-HETE and PGB1. The protein is UDP-glucuronosyltransferase 1A4 (Ugt1a4) of Oryctolagus cuniculus (Rabbit).